A 438-amino-acid chain; its full sequence is GTPase Obg (438 aa).

One can recognise an Obg domain in the interval 2 to 160 (SMFLDQVTID…RKIELELKVL (159 aa)). The disordered stretch occupies residues 128 to 147 (NIRFASPRNPAPEIAENGEP). In terms of domain architecture, OBG-type G spans 161 to 339 (ADVGLVGFPS…LLNATADLLE (179 aa)). GTP is bound by residues 167–174 (GFPSVGKS), 192–196 (FTTLV), 214–217 (DLPG), 284–287 (NKMD), and 320–322 (SGV). Residues Ser174 and Thr194 each coordinate Mg(2+). The 79-residue stretch at 360–438 (GFQPEGPEFT…IGNFEFEFVE (79 aa)) folds into the OCT domain.

It belongs to the TRAFAC class OBG-HflX-like GTPase superfamily. OBG GTPase family. Monomer. Mg(2+) is required as a cofactor.

It is found in the cytoplasm. Its function is as follows. An essential GTPase which binds GTP, GDP and possibly (p)ppGpp with moderate affinity, with high nucleotide exchange rates and a fairly low GTP hydrolysis rate. Plays a role in control of the cell cycle, stress response, ribosome biogenesis and in those bacteria that undergo differentiation, in morphogenesis control. The protein is GTPase Obg of Enterococcus faecalis (strain ATCC 700802 / V583).